A 201-amino-acid chain; its full sequence is NADH-ubiquinone oxidoreductase chain 6 (201 aa).

A run of 5 helical transmembrane segments spans residues 4–24, 28–48, 55–75, 88–108, and 151–171; these read LVLF…VISV, VFSV…LLLL, LLFL…VVMI, FYYA…IFII, and LFIL…ILTL.

It belongs to the complex I subunit 6 family.

The protein localises to the mitochondrion membrane. It catalyses the reaction a ubiquinone + NADH + 5 H(+)(in) = a ubiquinol + NAD(+) + 4 H(+)(out). Core subunit of the mitochondrial membrane respiratory chain NADH dehydrogenase (Complex I) that is believed to belong to the minimal assembly required for catalysis. Complex I functions in the transfer of electrons from NADH to the respiratory chain. The immediate electron acceptor for the enzyme is believed to be ubiquinone. This chain is NADH-ubiquinone oxidoreductase chain 6 (ND6), found in Cyanidium caldarium (Red alga).